The sequence spans 300 residues: LysM and putative peptidoglycan-binding domain-containing protein 3 (300 aa).

Over 1-216 the chain is Extracellular; the sequence is MAGRNQNRTA…PYYGADWGMG (216 aa). N-linked (GlcNAc...) asparagine glycans are attached at residues Asn-7 and Asn-26. Ser-55 carries the post-translational modification Phosphoserine. The LysM domain maps to 65-109; sequence LTKDIQEGDTLNAVALQYCCTVADIKRVNNLISDQDFFALRSIKI. Residues 136–157 are disordered; the sequence is PYFQEQDTVPANDSPSSSESAG. The span at 140–156 shows a compositional bias: polar residues; the sequence is EQDTVPANDSPSSSESA. An N-linked (GlcNAc...) asparagine glycan is attached at Asn-199. The helical transmembrane segment at 217-237 threads the bilayer; it reads WWTAVVIMLIVGIITPVFYLL. Over 238–300 the chain is Cytoplasmic; it reads YYEILAKVDV…LYRQDPQARD (63 aa). Residues 253–300 are disordered; the sequence is VDSSHLHPGLTPPSHHREMGNAIGPTKGIPVGQQDDHRLYRQDPQARD. Residues 286-300 show a composition bias toward basic and acidic residues; it reads QDDHRLYRQDPQARD.

Its subcellular location is the cell membrane. The protein localises to the golgi apparatus. Functionally, essential for Golgi structural integrity. The polypeptide is LysM and putative peptidoglycan-binding domain-containing protein 3 (Lysmd3) (Rattus norvegicus (Rat)).